The following is a 197-amino-acid chain: Large ribosomal subunit protein bL25 (197 aa).

It belongs to the bacterial ribosomal protein bL25 family. CTC subfamily. In terms of assembly, part of the 50S ribosomal subunit; part of the 5S rRNA/L5/L18/L25 subcomplex. Contacts the 5S rRNA. Binds to the 5S rRNA independently of L5 and L18.

Functionally, this is one of the proteins that binds to the 5S RNA in the ribosome where it forms part of the central protuberance. The protein is Large ribosomal subunit protein bL25 of Carboxydothermus hydrogenoformans (strain ATCC BAA-161 / DSM 6008 / Z-2901).